The sequence spans 578 residues: Tetratricopeptide repeat protein ttc-39B (578 aa).

3 TPR repeats span residues A297–Y330, C481–I514, and P522–Y554.

In Caenorhabditis elegans, this protein is Tetratricopeptide repeat protein ttc-39B.